A 466-amino-acid chain; its full sequence is ATP synthase subunit beta (466 aa).

156–163 (GGAGVGKT) is a binding site for ATP.

The protein belongs to the ATPase alpha/beta chains family. F-type ATPases have 2 components, CF(1) - the catalytic core - and CF(0) - the membrane proton channel. CF(1) has five subunits: alpha(3), beta(3), gamma(1), delta(1), epsilon(1). CF(0) has three main subunits: a(1), b(2) and c(9-12). The alpha and beta chains form an alternating ring which encloses part of the gamma chain. CF(1) is attached to CF(0) by a central stalk formed by the gamma and epsilon chains, while a peripheral stalk is formed by the delta and b chains.

The protein resides in the cell membrane. It carries out the reaction ATP + H2O + 4 H(+)(in) = ADP + phosphate + 5 H(+)(out). Its function is as follows. Produces ATP from ADP in the presence of a proton gradient across the membrane. The catalytic sites are hosted primarily by the beta subunits. The protein is ATP synthase subunit beta of Polynucleobacter asymbioticus (strain DSM 18221 / CIP 109841 / QLW-P1DMWA-1) (Polynucleobacter necessarius subsp. asymbioticus).